The sequence spans 380 residues: UDP-N-acetylglucosamine--N-acetylmuramyl-(pentapeptide) pyrophosphoryl-undecaprenol N-acetylglucosamine transferase (380 aa).

UDP-N-acetyl-alpha-D-glucosamine contacts are provided by residues 23-25 (TGG), N137, R178, S210, I266, and Q311.

The protein belongs to the glycosyltransferase 28 family. MurG subfamily.

The protein resides in the cell inner membrane. It catalyses the reaction di-trans,octa-cis-undecaprenyl diphospho-N-acetyl-alpha-D-muramoyl-L-alanyl-D-glutamyl-meso-2,6-diaminopimeloyl-D-alanyl-D-alanine + UDP-N-acetyl-alpha-D-glucosamine = di-trans,octa-cis-undecaprenyl diphospho-[N-acetyl-alpha-D-glucosaminyl-(1-&gt;4)]-N-acetyl-alpha-D-muramoyl-L-alanyl-D-glutamyl-meso-2,6-diaminopimeloyl-D-alanyl-D-alanine + UDP + H(+). The protein operates within cell wall biogenesis; peptidoglycan biosynthesis. Cell wall formation. Catalyzes the transfer of a GlcNAc subunit on undecaprenyl-pyrophosphoryl-MurNAc-pentapeptide (lipid intermediate I) to form undecaprenyl-pyrophosphoryl-MurNAc-(pentapeptide)GlcNAc (lipid intermediate II). In Bacteroides fragilis (strain ATCC 25285 / DSM 2151 / CCUG 4856 / JCM 11019 / LMG 10263 / NCTC 9343 / Onslow / VPI 2553 / EN-2), this protein is UDP-N-acetylglucosamine--N-acetylmuramyl-(pentapeptide) pyrophosphoryl-undecaprenol N-acetylglucosamine transferase.